The following is a 485-amino-acid chain: Zinc finger protein 639 (485 aa).

Positions 1–14 (MNEYPKKRKRKTLH) are enriched in basic residues. The interval 1-20 (MNEYPKKRKRKTLHPSRYSD) is disordered. Ser-60 carries the phosphoserine modification. Lys-76 is covalently cross-linked (Glycyl lysine isopeptide (Lys-Gly) (interchain with G-Cter in SUMO2)). Ser-88 is subject to Phosphoserine. Residues Lys-177, Lys-181, and Lys-226 each participate in a glycyl lysine isopeptide (Lys-Gly) (interchain with G-Cter in SUMO2) cross-link. 8 C2H2-type zinc fingers span residues 204–227 (YKCE…ILKH), 233–255 (NVCR…AKLH), 260–283 (YICK…ADTH), 289–311 (YWCE…FQEH), 374–397 (FVCQ…AIEH), 403–425 (HVCD…LNSH), 431–454 (YLCQ…DFKH), and 460–482 (HKCS…LPVH). Residues 371–455 (KNFFVCQVCG…LKIHLDFKHS (85 aa)) are interaction with CTNNA2.

The protein belongs to the krueppel C2H2-type zinc-finger protein family. Interacts with CTNNA2.

The protein localises to the nucleus. Its function is as follows. Binds DNA and may function as a transcriptional repressor. The polypeptide is Zinc finger protein 639 (ZNF639) (Homo sapiens (Human)).